The following is a 324-amino-acid chain: MMTYPVPQNPLLLRILRLMDAFSKSDDERDFYLDRVEGFILYIDLDKDQEDLNKIYQELEENAERYCLIPKLTFYEVKKIMETFINEKIYDIDTKEKFLEILQSKNAREQFLEFIYDHEAELEKWQQFYVERSRIRIIEWLRNNKFHFVFEEDLDFTKNVLEQLKIHLFDAKVGKEITQARQLLSNKAKIYYSNEALNPRPKRGRPPKQSAKVETETTISSDIYTKVPQAARRFLFLPEITSPSSITFSEKFDTEEEFLANLRGSTRVEDQLNLTNLSERFASLKELSAKLGYDSLSTGDFFGDDDEKVVTKTKGSKRGRKKSS.

The protein belongs to the UPF0158 family.

This chain is UPF0158 protein CPn_0518/CP_0235/CPj0518/CpB0539, found in Chlamydia pneumoniae (Chlamydophila pneumoniae).